The primary structure comprises 372 residues: Alpha-parvin (372 aa).

The segment at 1–31 (MATSPQKSPLVPKSPTPKSPPSRKKDDSFLG) is disordered. Ala-2 carries the post-translational modification N-acetylalanine. Residues Ser-8, Ser-14, and Ser-19 each carry the phosphoserine modification. An interaction with ARHGAP31 region spans residues 21–25 (PSRKK). A phosphoserine mark is found at Ser-28 and Ser-62. Calponin-homology (CH) domains are found at residues 95–202 (QELM…QYFR) and 262–369 (NVVK…TKYR). The interval 223 to 372 (GILQSRQIQE…NLFTKYRNVE (150 aa)) is required for interaction with TESK1 and ILK.

This sequence belongs to the parvin family. In terms of assembly, component of the heterotrimeric IPP (ILK-PINCH-PARVIN) complex composed of ILK, LIMS1/PINCH and PARVA; the complex binds to F-actin via the C-terminal tail of LIMS1 and the N-terminal region of PARVA, promoting F-actin filament bundling. Interacts with TGFB1I1. Interacts with ARHGAP31. Interacts with the actin cytoskeleton. Interacts (via C-terminus) with TESK1 (via C-terminus); the interaction inhibits TESK1 kinase activity. Interacts with PXN/PAXILLIN (via LD motif 4).

The protein resides in the cell junction. Its subcellular location is the focal adhesion. The protein localises to the cell membrane. It localises to the cytoplasm. It is found in the cytoskeleton. The protein resides in the myofibril. Its subcellular location is the sarcomere. The protein localises to the z line. Plays a role in sarcomere organization and in smooth muscle cell contraction. Required for normal development of the embryonic cardiovascular system, and for normal septation of the heart outflow tract. Plays a role in sprouting angiogenesis and is required for normal adhesion of vascular smooth muscle cells to endothelial cells during blood vessel development. Plays a role in the reorganization of the actin cytoskeleton, formation of lamellipodia and ciliogenesis. Plays a role in the establishment of cell polarity, cell adhesion, cell spreading, and directed cell migration. Within the IPP (ILK-PINCH-PARVIN) complex, binds to F-actin, promoting F-actin bundling, a process required to generate force for actin cytoskeleton reorganization and subsequent dynamic cell adhesion events such as cell spreading and migration. This Mus musculus (Mouse) protein is Alpha-parvin (Parva).